Consider the following 202-residue polypeptide: Recoverin (202 aa).

Residue G2 is the site of N-myristoyl glycine attachment. EF-hand domains lie at 24–59, 61–96, 97–132, and 147–182; these read TEEELSSWYQSFLKECPSGRITRQEFQTIYSKFFPE, DPKAYAQHVFRSFDANSDGTLDFKEYVIALHMTSAG, KTNQKLEWAFSLYDVDGNGTISKNEVLEIVTAIFKM, and TPEKRAEKIWGFFGKKDDDKLTEKEFIEGTLANKEI. The residue at position 39 (C39) is a Cysteine sulfenic acid (-SOH). D74, N76, D78, T80, E85, D110, D112, N114, T116, and E121 together coordinate Ca(2+). The segment at 189–192 is interaction with GRK1; that stretch reads EPQK. A modulates EF-hand 3 domain calcium binding affinity region spans residues 191–202; the sequence is QKVKEKLKEKKL.

Belongs to the recoverin family. Homodimer; disulfide-linked. Homodimerization is caused by prolonged intense illumination. May form a complex composed of RHO, GRK1 and RCVRN in a Ca(2+)-dependent manner; RCVRN prevents the interaction between GRK1 and RHO. Interacts (via C-terminus) with GRK1 (via N-terminus); the interaction is Ca(2+)-dependent. In terms of processing, the N-terminal glycine is linked to one of four different types of acyl groups. The most abundant is myristoleate (14:1), but 14:0, 14:2, and 12:0 acyl residues are also present. The Ca(2+) induced exposure of the myristoyl group, known as the calcium-myristoyl switch, promotes RCVRN binding to the photoreceptor cell membranes only when intracellular Ca(2+) concentration is high. Oxidation on Cys-39 occurs in response to prolonged intense illumination and results in the formation of disulfide homodimers, and to a lesser extent disulfide-linked heterodimers. As to expression, expressed in the retina (at protein level). Expressed in the pineal gland (at protein level).

The protein localises to the photoreceptor inner segment. It localises to the cell projection. It is found in the cilium. Its subcellular location is the photoreceptor outer segment. The protein resides in the photoreceptor outer segment membrane. The protein localises to the perikaryon. In terms of biological role, acts as a calcium sensor and regulates phototransduction of cone and rod photoreceptor cells. Modulates light sensitivity of cone photoreceptor in dark and dim conditions. In response to high Ca(2+) levels induced by low light levels, prolongs RHO/rhodopsin activation in rod photoreceptor cells by binding to and inhibiting GRK1-mediated phosphorylation of RHO/rhodopsin. Plays a role in scotopic vision/enhances vision in dim light by enhancing signal transfer between rod photoreceptors and rod bipolar cells. Improves rod photoreceptor sensitivity in dim light and mediates response of rod photoreceptors to facilitate detection of change and motion in bright light. In Bos taurus (Bovine), this protein is Recoverin (RCVRN).